Here is a 123-residue protein sequence, read N- to C-terminus: UPF0102 protein Pcar_2217 (123 aa).

The protein belongs to the UPF0102 family.

The polypeptide is UPF0102 protein Pcar_2217 (Syntrophotalea carbinolica (strain DSM 2380 / NBRC 103641 / GraBd1) (Pelobacter carbinolicus)).